A 76-amino-acid chain; its full sequence is Acyl carrier protein (76 aa).

A Carrier domain is found at 1–76; the sequence is MATFDKVKDI…DVVNYIEQNQ (76 aa). An O-(pantetheine 4'-phosphoryl)serine modification is found at Ser36.

It belongs to the acyl carrier protein (ACP) family. Post-translationally, 4'-phosphopantetheine is transferred from CoA to a specific serine of apo-ACP by AcpS. This modification is essential for activity because fatty acids are bound in thioester linkage to the sulfhydryl of the prosthetic group.

The protein localises to the cytoplasm. Its pathway is lipid metabolism; fatty acid biosynthesis. Functionally, carrier of the growing fatty acid chain in fatty acid biosynthesis. In Natranaerobius thermophilus (strain ATCC BAA-1301 / DSM 18059 / JW/NM-WN-LF), this protein is Acyl carrier protein.